The primary structure comprises 480 residues: Ribulose bisphosphate carboxylase large chain (480 aa).

Positions M1–S2 are excised as a propeptide. The residue at position 3 (P3) is an N-acetylproline. Position 14 is an N6,N6,N6-trimethyllysine (K14). Substrate-binding residues include N123 and T173. The Proton acceptor role is filled by K175. K177 provides a ligand contact to substrate. Mg(2+) is bound by residues K201, D203, and E204. An N6-carboxylysine modification is found at K201. The Proton acceptor role is filled by H294. Positions 295, 327, and 379 each coordinate substrate.

The protein belongs to the RuBisCO large chain family. Type I subfamily. In terms of assembly, heterohexadecamer of 8 large chains and 8 small chains; disulfide-linked. The disulfide link is formed within the large subunit homodimers. It depends on Mg(2+) as a cofactor. The disulfide bond which can form in the large chain dimeric partners within the hexadecamer appears to be associated with oxidative stress and protein turnover.

The protein resides in the plastid. It is found in the chloroplast. The catalysed reaction is 2 (2R)-3-phosphoglycerate + 2 H(+) = D-ribulose 1,5-bisphosphate + CO2 + H2O. It carries out the reaction D-ribulose 1,5-bisphosphate + O2 = 2-phosphoglycolate + (2R)-3-phosphoglycerate + 2 H(+). Functionally, ruBisCO catalyzes two reactions: the carboxylation of D-ribulose 1,5-bisphosphate, the primary event in carbon dioxide fixation, as well as the oxidative fragmentation of the pentose substrate in the photorespiration process. Both reactions occur simultaneously and in competition at the same active site. The sequence is that of Ribulose bisphosphate carboxylase large chain from Rivina humilis (Rougeplant).